The chain runs to 517 residues: Steroid 17-alpha-hydroxylase/17,20 lyase (517 aa).

Cysteine 451 is a heme binding site.

Belongs to the cytochrome P450 family. Requires heme as cofactor.

It localises to the membrane. The enzyme catalyses a C21-steroid + reduced [NADPH--hemoprotein reductase] + O2 = a 17alpha-hydroxy-C21-steroid + oxidized [NADPH--hemoprotein reductase] + H2O + H(+). It catalyses the reaction 17alpha-hydroxyprogesterone + reduced [NADPH--hemoprotein reductase] + O2 = androst-4-ene-3,17-dione + acetate + oxidized [NADPH--hemoprotein reductase] + H2O + 2 H(+). It carries out the reaction 17alpha-hydroxypregnenolone + reduced [NADPH--hemoprotein reductase] + O2 = 3beta-hydroxyandrost-5-en-17-one + acetate + oxidized [NADPH--hemoprotein reductase] + H2O + 2 H(+). The protein operates within lipid metabolism; steroid biosynthesis. Its function is as follows. Conversion of pregnenolone and progesterone to their 17-alpha-hydroxylated products and subsequently to dehydroepiandrosterone (DHEA) and androstenedione. Catalyzes both the 17-alpha-hydroxylation and the 17,20-lyase reaction. In Oryzias latipes (Japanese rice fish), this protein is Steroid 17-alpha-hydroxylase/17,20 lyase (cyp17a1).